We begin with the raw amino-acid sequence, 39 residues long: MTIDRTYPIFTVRWLAVHGLAVPTVFFLGAISAMQFIQR.

Residues 14 to 30 (WLAVHGLAVPTVFFLGA) form a helical membrane-spanning segment. Histidine 18 lines the heme pocket.

It belongs to the PsbE/PsbF family. As to quaternary structure, heterodimer of an alpha subunit and a beta subunit. PSII is composed of 1 copy each of membrane proteins PsbA, PsbB, PsbC, PsbD, PsbE, PsbF, PsbH, PsbI, PsbJ, PsbK, PsbL, PsbM, PsbT, PsbX, PsbY, PsbZ, Psb30/Ycf12, at least 3 peripheral proteins of the oxygen-evolving complex and a large number of cofactors. It forms dimeric complexes. Heme b is required as a cofactor.

The protein localises to the plastid. Its subcellular location is the chloroplast thylakoid membrane. This b-type cytochrome is tightly associated with the reaction center of photosystem II (PSII). PSII is a light-driven water:plastoquinone oxidoreductase that uses light energy to abstract electrons from H(2)O, generating O(2) and a proton gradient subsequently used for ATP formation. It consists of a core antenna complex that captures photons, and an electron transfer chain that converts photonic excitation into a charge separation. The polypeptide is Cytochrome b559 subunit beta (Physcomitrium patens (Spreading-leaved earth moss)).